Consider the following 155-residue polypeptide: Ribosome maturation factor RimP (155 aa).

Belongs to the RimP family.

It is found in the cytoplasm. In terms of biological role, required for maturation of 30S ribosomal subunits. This Bacteroides fragilis (strain ATCC 25285 / DSM 2151 / CCUG 4856 / JCM 11019 / LMG 10263 / NCTC 9343 / Onslow / VPI 2553 / EN-2) protein is Ribosome maturation factor RimP.